The following is a 1056-amino-acid chain: Carbamoyl phosphate synthase large chain (1056 aa).

Residues M1–D397 form a carboxyphosphate synthetic domain region. Residues R127, R167, G173, G174, E206, V208, E213, G239, I240, H241, Q282, and E294 each contribute to the ATP site. An ATP-grasp 1 domain is found at R131–I323. 3 residues coordinate Mg(2+): Q282, E294, and N296. Residues Q282, E294, and N296 each contribute to the Mn(2+) site. Positions N398–L530 are oligomerization domain. The interval V531–T920 is carbamoyl phosphate synthetic domain. Residues S662–V853 enclose the ATP-grasp 2 domain. ATP is bound by residues R698, S737, L739, E744, G769, V770, H771, S772, Q812, and E824. Mg(2+) is bound by residues Q812, E824, and N826. Residues Q812, E824, and N826 each contribute to the Mn(2+) site. The MGS-like domain maps to N919–M1056. Residues L921–M1056 form an allosteric domain region.

It belongs to the CarB family. In terms of assembly, composed of two chains; the small (or glutamine) chain promotes the hydrolysis of glutamine to ammonia, which is used by the large (or ammonia) chain to synthesize carbamoyl phosphate. Tetramer of heterodimers (alpha,beta)4. Requires Mg(2+) as cofactor. Mn(2+) serves as cofactor.

The enzyme catalyses hydrogencarbonate + L-glutamine + 2 ATP + H2O = carbamoyl phosphate + L-glutamate + 2 ADP + phosphate + 2 H(+). The catalysed reaction is hydrogencarbonate + NH4(+) + 2 ATP = carbamoyl phosphate + 2 ADP + phosphate + 2 H(+). The protein operates within amino-acid biosynthesis; L-arginine biosynthesis; carbamoyl phosphate from bicarbonate: step 1/1. It participates in pyrimidine metabolism; UMP biosynthesis via de novo pathway; (S)-dihydroorotate from bicarbonate: step 1/3. Its function is as follows. Large subunit of the glutamine-dependent carbamoyl phosphate synthetase (CPSase). CPSase catalyzes the formation of carbamoyl phosphate from the ammonia moiety of glutamine, carbonate, and phosphate donated by ATP, constituting the first step of 2 biosynthetic pathways, one leading to arginine and/or urea and the other to pyrimidine nucleotides. The large subunit (synthetase) binds the substrates ammonia (free or transferred from glutamine from the small subunit), hydrogencarbonate and ATP and carries out an ATP-coupled ligase reaction, activating hydrogencarbonate by forming carboxy phosphate which reacts with ammonia to form carbamoyl phosphate. The sequence is that of Carbamoyl phosphate synthase large chain from Methanoculleus marisnigri (strain ATCC 35101 / DSM 1498 / JR1).